Here is a 132-residue protein sequence, read N- to C-terminus: ATP synthase epsilon chain (132 aa).

Belongs to the ATPase epsilon chain family. F-type ATPases have 2 components, CF(1) - the catalytic core - and CF(0) - the membrane proton channel. CF(1) has five subunits: alpha(3), beta(3), gamma(1), delta(1), epsilon(1). CF(0) has three main subunits: a, b and c.

It localises to the cell inner membrane. Functionally, produces ATP from ADP in the presence of a proton gradient across the membrane. In Parvibaculum lavamentivorans (strain DS-1 / DSM 13023 / NCIMB 13966), this protein is ATP synthase epsilon chain.